Consider the following 229-residue polypeptide: DNA mismatch repair protein MutH (229 aa).

Belongs to the MutH family.

The protein localises to the cytoplasm. Its function is as follows. Sequence-specific endonuclease that cleaves unmethylated GATC sequences. It is involved in DNA mismatch repair. The polypeptide is DNA mismatch repair protein MutH (Escherichia coli O6:K15:H31 (strain 536 / UPEC)).